The following is a 168-amino-acid chain: Cell division inhibitor SulA (168 aa).

Residues 106–112 (ALLTGNY) form a ftsZ binding region. The segment at 161–168 (KIHSSLYH) is lon protease binding.

Belongs to the SulA family. In terms of assembly, interacts with FtsZ. Is rapidly cleaved and degraded by the Lon protease once DNA damage is repaired.

Its function is as follows. Component of the SOS system and an inhibitor of cell division. Accumulation of SulA causes rapid cessation of cell division and the appearance of long, non-septate filaments. In the presence of GTP, binds a polymerization-competent form of FtsZ in a 1:1 ratio, thus inhibiting FtsZ polymerization and therefore preventing it from participating in the assembly of the Z ring. This mechanism prevents the premature segregation of damaged DNA to daughter cells during cell division. This is Cell division inhibitor SulA from Serratia proteamaculans (strain 568).